A 146-amino-acid chain; its full sequence is Meiotically up-regulated gene 96 protein (146 aa).

Residues 85–104 (LIRYSLILTCLVAILLSVLW) traverse the membrane as a helical segment.

It is found in the cytoplasm. It localises to the membrane. Has a role in meiosis. The sequence is that of Meiotically up-regulated gene 96 protein (mug96) from Schizosaccharomyces pombe (strain 972 / ATCC 24843) (Fission yeast).